Here is a 254-residue protein sequence, read N- to C-terminus: Major prion protein (254 aa).

The first 28 residues, 1–28, serve as a signal peptide directing secretion; the sequence is MANLGYWLLALFVTTCTDVGLCKKRPKP. The interval 23–38 is interaction with ADGRG6; that stretch reads KKRPKPGGWNTGGSRY. The interval 23-231 is interaction with GRB2, ERI3 and SYN1; that stretch reads KKRPKPGGWN…SQAYYDGRRS (209 aa). The interval 24–107 is disordered; sequence KRPKPGGWNT…QWNKPSKPKT (84 aa). 5 repeat units span residues 51 to 59, 60 to 67, 68 to 75, 76 to 83, and 84 to 91. Residues 51-91 are 5 X 8 AA tandem repeats of P-H-G-G-G-W-G-Q; it reads PQSGGTWGQPHGGGWGQPHGGGWGQPHGGGWGQPHGGGWSQ. Residues 55-95 show a composition bias toward gly residues; it reads GTWGQPHGGGWGQPHGGGWGQPHGGGWGQPHGGGWSQGGGT. Residues H61, G62, G63, H69, G70, G71, H77, G78, G79, H85, G86, and G87 each coordinate Cu(2+). C179 and C214 are disulfide-bonded. N-linked (GlcNAc...) asparagine glycans are attached at residues N181 and N197. S231 carries the GPI-anchor amidated serine lipid modification. A propeptide spans 232–254 (removed in mature form); it reads SAVLFSSPPVILLISFLIFLIVG.

This sequence belongs to the prion family. In terms of assembly, monomer and homodimer. Has a tendency to aggregate into amyloid fibrils containing a cross-beta spine, formed by a steric zipper of superposed beta-strands. Soluble oligomers may represent an intermediate stage on the path to fibril formation. Copper binding may promote oligomerization. Interacts with GRB2, APP, ERI3/PRNPIP and SYN1. Mislocalized cytosolically exposed PrP interacts with MGRN1; this interaction alters MGRN1 subcellular location and causes lysosomal enlargement. Interacts with APP. Interacts with KIAA1191. Interacts with ADGRG6.

The protein resides in the cell membrane. Its subcellular location is the golgi apparatus. Functionally, its primary physiological function is unclear. May play a role in neuronal development and synaptic plasticity. May be required for neuronal myelin sheath maintenance. May promote myelin homeostasis through acting as an agonist for ADGRG6 receptor. May play a role in iron uptake and iron homeostasis. Soluble oligomers are toxic to cultured neuroblastoma cells and induce apoptosis (in vitro). Association with GPC1 (via its heparan sulfate chains) targets PRNP to lipid rafts. Also provides Cu(2+) or Zn(2+) for the ascorbate-mediated GPC1 deaminase degradation of its heparan sulfate side chains. The polypeptide is Major prion protein (Prnp) (Rattus norvegicus (Rat)).